The sequence spans 628 residues: Otolith matrix protein OMM-64 (628 aa).

The N-terminal stretch at 1 to 20 is a signal peptide; sequence MLSRLLIVPLIFALAGLAIS. Residues 43–628 are disordered; it reads KGDKDGGGLT…AAATALAAQS (586 aa). The span at 78–93 shows a compositional bias: low complexity; sequence DSSPDTTDTPDASSSD. Positions 182–214 are enriched in polar residues; sequence TESPGSDSAESPGSDSAESPGSDSTESPGSDST. Basic and acidic residues-rich tracts occupy residues 246–266, 276–285, and 311–343; these read ETDK…ATDK, ELDGKAHAED, and RPEK…RDSA. An N-linked (GlcNAc...) asparagine glycan is attached at Asn318. Acidic residues-rich tracts occupy residues 449–462, 477–489, 514–536, 544–556, and 565–578; these read DSQE…EAEP, EPQE…DTDD, DKED…MDKD, DSVD…DAEP, and DEID…PDSE. A compositionally biased stretch (low complexity) spans 613–628; that stretch reads ASQAADAAATALAAQS.

In terms of tissue distribution, specifically expressed in otolith matrix-producing cells.

The protein resides in the secreted. It is found in the extracellular space. The protein localises to the extracellular matrix. Functionally, calcium-binding component of otoliths, a calcium carbonate structure of the inner ear involved in hearing and balance sensing. Binds calcium. The polypeptide is Otolith matrix protein OMM-64 (Oncorhynchus mykiss (Rainbow trout)).